The primary structure comprises 36 residues: MSDIN-like toxin proprotein 10 (36 aa).

The propeptide occupies 1-10 (MSDINATRLP). Positions 11–19 (GAYPPVPMP) form a cross-link, cyclopeptide (Gly-Pro). Positions 20 to 36 (CVGDADNFTLTRGENLC) are excised as a propeptide.

Belongs to the MSDIN fungal toxin family. In terms of processing, processed by the macrocyclase-peptidase enzyme POPB to yield a toxic cyclic nonapeptide. POPB first removes 10 residues from the N-terminus. Conformational trapping of the remaining peptide forces the enzyme to release this intermediate rather than proceed to macrocyclization. The enzyme rebinds the remaining peptide in a different conformation and catalyzes macrocyclization of the N-terminal 9 residues.

Its function is as follows. Probable toxin that belongs to the MSDIN-like toxin family responsible for a large number of food poisoning cases and deaths. In Amanita bisporigera (Destroying angel), this protein is MSDIN-like toxin proprotein 10.